A 386-amino-acid polypeptide reads, in one-letter code: Probable serine/threonine-protein kinase PBL23 (386 aa).

Residue cysteine 5 is the site of S-palmitoyl cysteine attachment. Residues 82–360 form the Protein kinase domain; the sequence is FNPDNQLGEG…SDVVTALEYL (279 aa). ATP contacts are provided by residues 88-96 and lysine 111; that span reads LGEGGFGRV. Aspartate 210 acts as the Proton acceptor in catalysis. The tract at residues 365–386 is disordered; sequence TEEDGQTVEGEEEEEEDERSKL. A compositionally biased stretch (acidic residues) spans 368–386; the sequence is DGQTVEGEEEEEEDERSKL.

It belongs to the protein kinase superfamily. Ser/Thr protein kinase family.

It is found in the cell membrane. It catalyses the reaction L-seryl-[protein] + ATP = O-phospho-L-seryl-[protein] + ADP + H(+). It carries out the reaction L-threonyl-[protein] + ATP = O-phospho-L-threonyl-[protein] + ADP + H(+). In terms of biological role, may be involved in plant defense signaling. The sequence is that of Probable serine/threonine-protein kinase PBL23 from Arabidopsis thaliana (Mouse-ear cress).